Consider the following 837-residue polypeptide: Striatin-interacting protein 1 (837 aa).

Residue M1 is modified to N-acetylmethionine. Disordered stretches follow at residues 1 to 67 and 333 to 423; these read MEPA…ESPD and AASP…KGLP. A compositionally biased stretch (pro residues) spans 18–35; that stretch reads PQPPPPPPPAAAQPPPGA. A compositionally biased stretch (low complexity) spans 36–46; it reads PRAAAGLLPGG. Residues 47 to 60 are compositionally biased toward basic and acidic residues; it reads KAREFNRNQRKDSE. S59, S335, and S339 each carry phosphoserine. The segment covering 356-377 has biased composition (basic and acidic residues); that stretch reads KALIKQDNLDAFNERDPYKADD. The span at 378–391 shows a compositional bias: acidic residues; that stretch reads SREEEEENDDDNSL. S788 carries the phosphoserine modification. The tract at residues 796–837 is required for STRIPAK core complex formation; that stretch reads DNCLQSVLGQRVDLPEDFQMNYDLWLEREVFSKPISWEELLQ.

This sequence belongs to the STRIP family. Part of the core of STRIPAK complexes composed of PP2A catalytic and scaffolding subunits, the striatins (PP2A regulatory subunits), the striatin-associated proteins MOB4, STRIP1 and STRIP2, PDCD10 and members of the STE20 kinases, such as STK24 and STK26. The STRIPAK complex can be extended by adapter proteins such as SLMAP:SIKE1, CTTNBP2 or CTTNBP2NL. Interacts with CDC42BPB. Interacts with CTTNBP2NL.

The protein resides in the cytoplasm. Plays a role in the regulation of cell morphology and cytoskeletal organization. Required in the cortical actin filament dynamics and cell shape. Part of the striatin-interacting phosphatase and kinase (STRIPAK) complexes. STRIPAK complexes have critical roles in protein (de)phosphorylation and are regulators of multiple signaling pathways including Hippo, MAPK, nuclear receptor and cytoskeleton remodeling. Different types of STRIPAK complexes are involved in a variety of biological processes such as cell growth, differentiation, apoptosis, metabolism and immune regulation. The protein is Striatin-interacting protein 1 of Homo sapiens (Human).